The sequence spans 118 residues: Large ribosomal subunit protein bL19 (118 aa).

This sequence belongs to the bacterial ribosomal protein bL19 family.

Functionally, this protein is located at the 30S-50S ribosomal subunit interface and may play a role in the structure and function of the aminoacyl-tRNA binding site. This is Large ribosomal subunit protein bL19 from Frankia alni (strain DSM 45986 / CECT 9034 / ACN14a).